Reading from the N-terminus, the 457-residue chain is Ribosomal protein uS12 methylthiotransferase RimO (457 aa).

An MTTase N-terminal domain is found at 6–116; the sequence is PKVGFVSLGC…VMEAVHAALP (111 aa). Residues cysteine 15, cysteine 51, cysteine 80, cysteine 147, cysteine 151, and cysteine 154 each contribute to the [4Fe-4S] cluster site. Residues 133–370 form the Radical SAM core domain; it reads LTPRHYAYLK…MARQAEISAA (238 aa). A TRAM domain is found at 373 to 441; the sequence is EAKIGSVQQC…EHDLFGDALP (69 aa).

It belongs to the methylthiotransferase family. RimO subfamily. [4Fe-4S] cluster is required as a cofactor.

Its subcellular location is the cytoplasm. It catalyses the reaction L-aspartate(89)-[ribosomal protein uS12]-hydrogen + (sulfur carrier)-SH + AH2 + 2 S-adenosyl-L-methionine = 3-methylsulfanyl-L-aspartate(89)-[ribosomal protein uS12]-hydrogen + (sulfur carrier)-H + 5'-deoxyadenosine + L-methionine + A + S-adenosyl-L-homocysteine + 2 H(+). Its function is as follows. Catalyzes the methylthiolation of an aspartic acid residue of ribosomal protein uS12. The polypeptide is Ribosomal protein uS12 methylthiotransferase RimO (Xanthomonas campestris pv. campestris (strain 8004)).